The following is a 310-amino-acid chain: tRNA pseudouridine synthase B (310 aa).

The active-site Nucleophile is the aspartate 37.

The protein belongs to the pseudouridine synthase TruB family. Type 1 subfamily.

It carries out the reaction uridine(55) in tRNA = pseudouridine(55) in tRNA. Responsible for synthesis of pseudouridine from uracil-55 in the psi GC loop of transfer RNAs. The chain is tRNA pseudouridine synthase B from Deinococcus deserti (strain DSM 17065 / CIP 109153 / LMG 22923 / VCD115).